A 298-amino-acid polypeptide reads, in one-letter code: Putative enoyl-CoA reductase (298 aa).

4 helical membrane-spanning segments follow: residues 162 to 182, 189 to 209, 229 to 249, and 254 to 274; these read CVYY…PYYT, LVNA…AVHV, ILFS…WVAF, and SMLT…EWAV.

The protein belongs to the steroid 5-alpha reductase family.

The protein resides in the membrane. It functions in the pathway lipid metabolism; fatty acid biosynthesis. In terms of biological role, involved in the synthesis of fatty acids. This chain is Putative enoyl-CoA reductase, found in Trypanosoma brucei brucei (strain 927/4 GUTat10.1).